A 400-amino-acid chain; its full sequence is Formate-dependent phosphoribosylglycinamide formyltransferase (400 aa).

N(1)-(5-phospho-beta-D-ribosyl)glycinamide-binding positions include 22–23 (EL) and E82. ATP-binding positions include R115, K157, 162–167 (SSGKGQ), 197–200 (EGFV), and E205. In terms of domain architecture, ATP-grasp spans 120 to 315 (RLAAETLGVP…EFELHARAIL (196 aa)). Residues E274 and E286 each coordinate Mg(2+). Residues D293, K362, and 369-370 (RR) each bind N(1)-(5-phospho-beta-D-ribosyl)glycinamide.

The protein belongs to the PurK/PurT family. In terms of assembly, homodimer.

The enzyme catalyses N(1)-(5-phospho-beta-D-ribosyl)glycinamide + formate + ATP = N(2)-formyl-N(1)-(5-phospho-beta-D-ribosyl)glycinamide + ADP + phosphate + H(+). It functions in the pathway purine metabolism; IMP biosynthesis via de novo pathway; N(2)-formyl-N(1)-(5-phospho-D-ribosyl)glycinamide from N(1)-(5-phospho-D-ribosyl)glycinamide (formate route): step 1/1. Involved in the de novo purine biosynthesis. Catalyzes the transfer of formate to 5-phospho-ribosyl-glycinamide (GAR), producing 5-phospho-ribosyl-N-formylglycinamide (FGAR). Formate is provided by PurU via hydrolysis of 10-formyl-tetrahydrofolate. The chain is Formate-dependent phosphoribosylglycinamide formyltransferase from Mycolicibacterium smegmatis (strain ATCC 700084 / mc(2)155) (Mycobacterium smegmatis).